The chain runs to 177 residues: DELTA-stichotoxin-Hcr4b (177 aa).

Positions 3–12 (ALAGTITLGA) are plays an important role in the hemolytic activity. The tract at residues 11 to 30 (GASLGFQILDKVLGELGKVS) is N-terminal region. The phosphocholine site is built by S54, V87, S105, P107, Y133, Y137, and Y138. The tract at residues 105–120 (SVPFDYNLYSNWWDVK) is trp-rich region, which is important for the binding to lipid membrane.

This sequence belongs to the actinoporin family. Sea anemone subfamily. As to quaternary structure, octamer or nonamer in membranes. Monomer in the soluble state.

It is found in the secreted. Its subcellular location is the nematocyst. It localises to the target cell membrane. Pore-forming protein that forms cations-selective hydrophilic pores of around 1 nm and causes cardiac stimulation and cytolysis. Pore formation is a multi-step process that involves specific recognition of membrane sphingomyelin (but neither cholesterol nor phosphatidylcholine) using aromatic rich region and adjacent phosphocholine (POC) binding site, firm binding to the membrane (mainly driven by hydrophobic interactions) accompanied by the transfer of the N-terminal region to the lipid-water interface and finally pore formation after oligomerization of monomers. Cytolytic effects include red blood cells hemolysis, platelet aggregation and lysis, cytotoxic and cytostatic effects on fibroblasts. Lethality in mammals has been ascribed to severe vasospasm of coronary vessels, cardiac arrhythmia, and inotropic effects. Preincubation with exogenous sphingomyeline causes complete loss of hemolytic activity. The chain is DELTA-stichotoxin-Hcr4b from Radianthus crispa (Leathery sea anemone).